The following is a 106-amino-acid chain: MKTPLPPVLRAALYRRAVACAWLTVCERQHRYPHLTLESLEAAIAAELEGFYLRQHGEEKGRQIACALLEDLMESGPLKAAPSLSFLGLVVMDELCARHIKAPVLH.

The sequence is that of P4 prophage-derived uncharacterized protein t2655 from Salmonella typhi.